We begin with the raw amino-acid sequence, 118 residues long: Holo-[acyl-carrier-protein] synthase (118 aa).

Residues Asp-8 and Glu-57 each contribute to the Mg(2+) site.

The protein belongs to the P-Pant transferase superfamily. AcpS family. Mg(2+) serves as cofactor.

The protein localises to the cytoplasm. The catalysed reaction is apo-[ACP] + CoA = holo-[ACP] + adenosine 3',5'-bisphosphate + H(+). Functionally, transfers the 4'-phosphopantetheine moiety from coenzyme A to a Ser of acyl-carrier-protein. In Pediococcus pentosaceus (strain ATCC 25745 / CCUG 21536 / LMG 10740 / 183-1w), this protein is Holo-[acyl-carrier-protein] synthase.